The following is a 286-amino-acid chain: S-methyl-5'-thioadenosine phosphorylase (286 aa).

Phosphate-binding positions include Ser11, 53-54, and 86-87; these read RH and SA. Met185 contributes to the substrate binding site. Residue Thr186 coordinates phosphate. Substrate is bound at residue 209–211; the sequence is DYD.

It belongs to the PNP/MTAP phosphorylase family. MTAP subfamily. In terms of assembly, homohexamer. Dimer of a homotrimer.

It carries out the reaction S-methyl-5'-thioadenosine + phosphate = 5-(methylsulfanyl)-alpha-D-ribose 1-phosphate + adenine. It participates in amino-acid biosynthesis; L-methionine biosynthesis via salvage pathway; S-methyl-5-thio-alpha-D-ribose 1-phosphate from S-methyl-5'-thioadenosine (phosphorylase route): step 1/1. In terms of biological role, catalyzes the reversible phosphorylation of S-methyl-5'-thioadenosine (MTA) to adenine and 5-methylthioribose-1-phosphate. Involved in the breakdown of MTA, a major by-product of polyamine biosynthesis. Responsible for the first step in the methionine salvage pathway after MTA has been generated from S-adenosylmethionine. Has broad substrate specificity with 6-aminopurine nucleosides as preferred substrates. This Geobacter sulfurreducens (strain ATCC 51573 / DSM 12127 / PCA) protein is S-methyl-5'-thioadenosine phosphorylase.